Consider the following 310-residue polypeptide: Retrotransposon Gag-like protein 4 (310 aa).

The CCHC-type zinc-finger motif lies at 278–295 (QLCLYCSQSGHFTRDCLA).

In terms of biological role, involved in cognitive function in the brain, possibly via the noradrenergic system. In Homo sapiens (Human), this protein is Retrotransposon Gag-like protein 4.